The following is a 422-amino-acid chain: Lactoyl-CoA dehydratase subunit alpha (422 aa).

This sequence belongs to the FldB/FldC dehydratase alpha/beta subunit family. In terms of assembly, heterodimer of an alpha (LcdA) and a beta (LcdB) subunit. [4Fe-4S] cluster is required as a cofactor. FMN serves as cofactor. It depends on riboflavin as a cofactor. Requires Mg(2+) as cofactor.

The catalysed reaction is (R)-lactoyl-CoA = acryloyl-CoA + H2O. It carries out the reaction (2R)-hydroxybutanoyl-CoA = (2E)-butenoyl-CoA + H2O. With respect to regulation, activated by the LcdC protein. Functionally, involved in the acrylate pathway for the conversion of D-lactic acid to propionic acid. Catalyzes the reversible dehydration of Lactoyl-CoA and 2-hydroxybutyroyl-CoA to acryloyl-CoA and crotonyl-CoA, respectively. The protein is Lactoyl-CoA dehydratase subunit alpha (lcdA) of Anaerotignum propionicum (Clostridium propionicum).